We begin with the raw amino-acid sequence, 229 residues long: NAD(P)H-quinone oxidoreductase subunit K, chloroplastic (229 aa).

The [4Fe-4S] cluster site is built by cysteine 43, cysteine 44, cysteine 108, and cysteine 139.

It belongs to the complex I 20 kDa subunit family. As to quaternary structure, NDH is composed of at least 16 different subunits, 5 of which are encoded in the nucleus. [4Fe-4S] cluster is required as a cofactor.

It localises to the plastid. It is found in the chloroplast thylakoid membrane. It carries out the reaction a plastoquinone + NADH + (n+1) H(+)(in) = a plastoquinol + NAD(+) + n H(+)(out). The enzyme catalyses a plastoquinone + NADPH + (n+1) H(+)(in) = a plastoquinol + NADP(+) + n H(+)(out). NDH shuttles electrons from NAD(P)H:plastoquinone, via FMN and iron-sulfur (Fe-S) centers, to quinones in the photosynthetic chain and possibly in a chloroplast respiratory chain. The immediate electron acceptor for the enzyme in this species is believed to be plastoquinone. Couples the redox reaction to proton translocation, and thus conserves the redox energy in a proton gradient. This Aethionema grandiflorum (Persian stone-cress) protein is NAD(P)H-quinone oxidoreductase subunit K, chloroplastic.